The following is a 491-amino-acid chain: Probable glycine dehydrogenase (decarboxylating) subunit 2 (491 aa).

Lys273 carries the N6-(pyridoxal phosphate)lysine modification.

Belongs to the GcvP family. C-terminal subunit subfamily. As to quaternary structure, the glycine cleavage system is composed of four proteins: P, T, L and H. In this organism, the P 'protein' is a heterodimer of two subunits. The cofactor is pyridoxal 5'-phosphate.

It catalyses the reaction N(6)-[(R)-lipoyl]-L-lysyl-[glycine-cleavage complex H protein] + glycine + H(+) = N(6)-[(R)-S(8)-aminomethyldihydrolipoyl]-L-lysyl-[glycine-cleavage complex H protein] + CO2. In terms of biological role, the glycine cleavage system catalyzes the degradation of glycine. The P protein binds the alpha-amino group of glycine through its pyridoxal phosphate cofactor; CO(2) is released and the remaining methylamine moiety is then transferred to the lipoamide cofactor of the H protein. This chain is Probable glycine dehydrogenase (decarboxylating) subunit 2, found in Bacillus anthracis (strain A0248).